Reading from the N-terminus, the 145-residue chain is Protein SPMIP3 (145 aa).

The protein is Protein SPMIP3 of Mus musculus (Mouse).